Here is a 199-residue protein sequence, read N- to C-terminus: Fe/S biogenesis protein NfuA (199 aa).

[4Fe-4S] cluster is bound by residues cysteine 151 and cysteine 154.

Belongs to the NfuA family. In terms of assembly, homodimer. Requires [4Fe-4S] cluster as cofactor.

Functionally, involved in iron-sulfur cluster biogenesis. Binds a 4Fe-4S cluster, can transfer this cluster to apoproteins, and thereby intervenes in the maturation of Fe/S proteins. Could also act as a scaffold/chaperone for damaged Fe/S proteins. The polypeptide is Fe/S biogenesis protein NfuA (Xylella fastidiosa (strain M23)).